Here is a 159-residue protein sequence, read N- to C-terminus: Probable cyclic pyranopterin monophosphate synthase (159 aa).

Residues 75 to 77 (LCH) and 111 to 112 (ME) each bind substrate. Aspartate 126 is a catalytic residue.

It belongs to the MoaC family. In terms of assembly, homohexamer; trimer of dimers.

It carries out the reaction (8S)-3',8-cyclo-7,8-dihydroguanosine 5'-triphosphate = cyclic pyranopterin phosphate + diphosphate. It participates in cofactor biosynthesis; molybdopterin biosynthesis. In terms of biological role, catalyzes the conversion of (8S)-3',8-cyclo-7,8-dihydroguanosine 5'-triphosphate to cyclic pyranopterin monophosphate (cPMP). This chain is Probable cyclic pyranopterin monophosphate synthase, found in Pyrococcus abyssi (strain GE5 / Orsay).